The following is a 350-amino-acid chain: Protein-glutamate methylesterase/protein-glutamine glutaminase 1 (350 aa).

One can recognise a Response regulatory domain in the interval 3–121 (KVLIVEDSPV…RDYDIRARDL (119 aa)). Asp-54 carries the 4-aspartylphosphate modification. In terms of domain architecture, CheB-type methylesterase spans 148 to 342 (PASGEPDIGK…PPEKIARVLV (195 aa)). Residues Ser-170, His-197, and Asp-290 contribute to the active site.

The protein belongs to the CheB family. Phosphorylated by CheA. Phosphorylation of the N-terminal regulatory domain activates the methylesterase activity.

Its subcellular location is the cytoplasm. It catalyses the reaction [protein]-L-glutamate 5-O-methyl ester + H2O = L-glutamyl-[protein] + methanol + H(+). It carries out the reaction L-glutaminyl-[protein] + H2O = L-glutamyl-[protein] + NH4(+). In terms of biological role, involved in chemotaxis. Part of a chemotaxis signal transduction system that modulates chemotaxis in response to various stimuli. Catalyzes the demethylation of specific methylglutamate residues introduced into the chemoreceptors (methyl-accepting chemotaxis proteins or MCP) by CheR. Also mediates the irreversible deamidation of specific glutamine residues to glutamic acid. The sequence is that of Protein-glutamate methylesterase/protein-glutamine glutaminase 1 from Syntrophus aciditrophicus (strain SB).